Here is a 316-residue protein sequence, read N- to C-terminus: Small ribosomal subunit protein RACK1 (316 aa).

WD repeat units follow at residues 13–44 (GHNG…IIWN), 61–91 (GHSH…RLWE), 103–133 (GHTN…KLWN), 146–178 (GHTE…KVWE), 190–220 (GHTG…MLWD), 231–260 (NAND…IIFD), and 281–311 (SREP…RAWG).

It belongs to the WD repeat G protein beta family. Ribosomal protein RACK1 subfamily. Component of the small ribosomal subunit (SSU). Mature N.crassa ribosomes consist of a small (40S) and a large (60S) subunit. The 40S small subunit contains 1 molecule of ribosomal RNA (18S rRNA) and at least 32 different proteins. The large 60S subunit contains 3 rRNA molecules (26S, 5.8S and 5S rRNA) and at least 42 different proteins.

The protein resides in the cytoplasm. Its function is as follows. Component of the ribosome, a large ribonucleoprotein complex responsible for the synthesis of proteins in the cell. The small ribosomal subunit (SSU) binds messenger RNAs (mRNAs) and translates the encoded message by selecting cognate aminoacyl-transfer RNA (tRNA) molecules. The large subunit (LSU) contains the ribosomal catalytic site termed the peptidyl transferase center (PTC), which catalyzes the formation of peptide bonds, thereby polymerizing the amino acids delivered by tRNAs into a polypeptide chain. The nascent polypeptides leave the ribosome through a tunnel in the LSU and interact with protein factors that function in enzymatic processing, targeting, and the membrane insertion of nascent chains at the exit of the ribosomal tunnel. Required to activate general amino acid control under conditions of amino acid limitation in the vegetative growth phase, and for formation of protoperithecia in preparation for the sexual phase of the life cycle of N.crassa. The protein is Small ribosomal subunit protein RACK1 (cpc-2) of Neurospora crassa (strain ATCC 24698 / 74-OR23-1A / CBS 708.71 / DSM 1257 / FGSC 987).